The primary structure comprises 283 residues: Bifunctional protein FolD 2 (283 aa).

Residues 165 to 167, S190, and I231 contribute to the NADP(+) site; that span reads GAS.

The protein belongs to the tetrahydrofolate dehydrogenase/cyclohydrolase family. As to quaternary structure, homodimer.

It carries out the reaction (6R)-5,10-methylene-5,6,7,8-tetrahydrofolate + NADP(+) = (6R)-5,10-methenyltetrahydrofolate + NADPH. The enzyme catalyses (6R)-5,10-methenyltetrahydrofolate + H2O = (6R)-10-formyltetrahydrofolate + H(+). The protein operates within one-carbon metabolism; tetrahydrofolate interconversion. Its function is as follows. Catalyzes the oxidation of 5,10-methylenetetrahydrofolate to 5,10-methenyltetrahydrofolate and then the hydrolysis of 5,10-methenyltetrahydrofolate to 10-formyltetrahydrofolate. This is Bifunctional protein FolD 2 from Bordetella pertussis (strain Tohama I / ATCC BAA-589 / NCTC 13251).